Consider the following 483-residue polypeptide: Nuc-1 negative regulatory protein preg (483 aa).

Composition is skewed to low complexity over residues 1–32 (MLTRSPASAAATSPTTTVTVTVTAAATSPRPS), 60–80 (SSRRQSATAPATSSTSLPISI), and 176–200 (ASALASTSEATAAPIPHGPTVAVAV). 3 disordered regions span residues 1–112 (MLTR…SRPQ), 164–234 (NTVG…SQGD), and 434–483 (CPEP…RHAT). Positions 435 to 473 (PEPEEADDEDEDEELDESDAIGDDDDDIDGEGGEREEET) are enriched in acidic residues.

It belongs to the cyclin family.

Negative regulator, together with pgov, of the transcriptional activator nuc-1, which controls the expression of phosphorous acquisition enzymes. In Neurospora crassa (strain ATCC 24698 / 74-OR23-1A / CBS 708.71 / DSM 1257 / FGSC 987), this protein is Nuc-1 negative regulatory protein preg (preg).